Reading from the N-terminus, the 258-residue chain is DNA repair protein RecO (258 aa).

It belongs to the RecO family.

Its function is as follows. Involved in DNA repair and RecF pathway recombination. The chain is DNA repair protein RecO from Lactiplantibacillus plantarum (strain ATCC BAA-793 / NCIMB 8826 / WCFS1) (Lactobacillus plantarum).